A 262-amino-acid polypeptide reads, in one-letter code: uncharacterized protein (262 aa).

2 disordered regions span residues 1-30 (MGKK…KKEK) and 232-262 (EEEE…DMEE). Acidic residues-rich tracts occupy residues 9–21 (NEDG…ETES), 232–245 (EEEE…EETD), and 253–262 (EEDEDEDMEE).

This is an uncharacterized protein from Caenorhabditis elegans.